We begin with the raw amino-acid sequence, 413 residues long: MNELLIKAEQLQQAAKTLALLSTEEKNEALTRIAEALIKQKEWILQENEKDVALGKEQGLSPALIDRLQLTNERIEQIVDGVRQVADLPDPIGEIVEEWTRPNGLRIQTIRVPLGVIGMVYEARPNVTVDAASLCLKTGNAVLLRGSSSALHSNKALVHVMKEALRDSAIPADAIQLLEDTSREAAQQMFRLNGYLDVLIPRGGAGLIRSVIENATVPVLETGVGNCHIFIDESAQKQMAIDIVLNAKLQRPSVCNAVETVLIHQNWPYISELVETLHARGVELRGDSQLASSYSFIQQAAETDWSTEYLAPILAVKLVQNVKEAVDHINRYGTKHSEAIISEQNDNVRFFFQAIDAAVLYHNASTRFTDGEQFGYGAEIGISTQKLHARGPMGLRAITTTKSLVYGTGQIRS.

It belongs to the gamma-glutamyl phosphate reductase family.

Its subcellular location is the cytoplasm. The catalysed reaction is L-glutamate 5-semialdehyde + phosphate + NADP(+) = L-glutamyl 5-phosphate + NADPH + H(+). It participates in amino-acid biosynthesis; L-proline biosynthesis; L-glutamate 5-semialdehyde from L-glutamate: step 2/2. Its function is as follows. Catalyzes the NADPH-dependent reduction of L-glutamate 5-phosphate into L-glutamate 5-semialdehyde and phosphate. The product spontaneously undergoes cyclization to form 1-pyrroline-5-carboxylate. The sequence is that of Gamma-glutamyl phosphate reductase from Geobacillus sp. (strain WCH70).